Reading from the N-terminus, the 544-residue chain is Cytochrome P450 monooxygenase notG' (544 aa).

The first 22 residues, 1-22 (MELPFSAMSLLYLLVGIAGVIS), serve as a signal peptide directing secretion. A run of 2 helical transmembrane segments spans residues 42–62 (WYTL…GLPL) and 66–86 (AKAT…SLLL). Residues Asn226 and Asn404 are each glycosylated (N-linked (GlcNAc...) asparagine). Cys487 contributes to the heme binding site.

The protein belongs to the cytochrome P450 family. Heme serves as cofactor.

The protein localises to the membrane. It functions in the pathway alkaloid biosynthesis. Cytochrome P450 monooxygenase; part of the gene cluster that mediates the biosynthesis of notoamide, a fungal indole alkaloid that belongs to a family of natural products containing a characteristic bicyclo[2.2.2]diazaoctane core. The first step of notoamide biosynthesis involves coupling of L-proline and L-tryptophan by the bimodular NRPS notE', to produce cyclo-L-tryptophan-L-proline called brevianamide F. The reverse prenyltransferase notF' then acts as a deoxybrevianamide E synthase and converts brevianamide F to deoxybrevianamide E via reverse prenylation at C-2 of the indole ring leading to the bicyclo[2.2.2]diazaoctane core. Deoxybrevianamide E is further hydroxylated at C-6 of the indole ring, likely catalyzed by the cytochrome P450 monooxygenase notG', to yield 6-hydroxy-deoxybrevianamide E. 6-hydroxy-deoxybrevianamide E is a specific substrate of the prenyltransferase notC' for normal prenylation at C-7 to produce 6-hydroxy-7-prenyl-deoxybrevianamide, also called notoamide S. As the proposed pivotal branching point in notoamide biosynthesis, notoamide S can be diverted to notoamide E through an oxidative pyran ring closure putatively catalyzed by either notH' cytochrome P450 monooxygenase or the notD' FAD-linked oxidoreductase. This step would be followed by an indole 2,3-epoxidation-initiated pinacol-like rearrangement catalyzed by the notB' FAD-dependent monooxygenase leading to the formation of notoamide C and notoamide D. On the other hand notoamide S is converted to notoamide T by notH' (or notD'), a bifunctional oxidase that also functions as the intramolecular Diels-Alderase responsible for generation of (-)-notoamide T. To generate antipodal (+)-notoaminide T, notH (or notD) in Aspergillus strain MF297-2 is expected to catalyze a Diels-Alder reaction leading to the opposite stereochemistry. The remaining oxidoreductase notD' (or notH') likely catalyzes the oxidative pyran ring formation to yield (-)-stephacidin A. The FAD-dependent monooxygenase notI' is highly similar to notB' and is predicted to catalyze a similar conversion from (-)-stephacidin A to (+)-notoamide B via the 2,3-epoxidation of (-)-stephacidin A followed by a pinacol-type rearrangement. Finally, it remains unclear which enzyme could be responsible for the final hydroxylation steps leading to notoamide A and sclerotiamide. This chain is Cytochrome P450 monooxygenase notG', found in Aspergillus versicolor.